The following is a 442-amino-acid chain: C4-dicarboxylate transport protein 4 (442 aa).

The next 6 helical transmembrane spans lie at 20–40 (ILYV…YFYP), 53–73 (FIAL…VHGI), 90–110 (LIYF…VGEV), 160–180 (GDLL…AFLG), 209–229 (PVGA…GSLL), and 233–253 (ALIG…LGAI).

This sequence belongs to the dicarboxylate/amino acid:cation symporter (DAACS) (TC 2.A.23) family.

The protein localises to the cell inner membrane. Functionally, responsible for the transport of dicarboxylates such as succinate, fumarate, and malate from the periplasm across the membrane. The sequence is that of C4-dicarboxylate transport protein 4 from Bradyrhizobium diazoefficiens (strain JCM 10833 / BCRC 13528 / IAM 13628 / NBRC 14792 / USDA 110).